Here is a 246-residue protein sequence, read N- to C-terminus: E3 ubiquitin-protein ligase MARCHF2 (246 aa).

An RING-CH-type zinc finger spans residues 56–116 (DTPSDGPFCR…ELCHTEFAVE (61 aa)). The segment at 56–116 (DTPSDGPFCR…ELCHTEFAVE (61 aa)) is required for inhibition of HIV-1 virus production and VSV G protein expression. Cys64, Cys67, Cys80, Cys82, His90, Cys93, Cys106, and Cys109 together coordinate Zn(2+). A required for interaction with IKBKG region spans residues 121–246 (PLTEWLKDPG…LKKVAEETPV (126 aa)). Transmembrane regions (helical) follow at residues 138–158 (LCCD…SGWL) and 175–195 (AVGL…WTLV).

In terms of assembly, interacts with STX6; the interaction promotes MARCHF2-mediated ubiquitination and degradation of CFTR. Interacts with MARCHF3. Interacts with GOPC/CAL; the interaction leads to CFTR ubiquitination and degradation. Interacts with CFTR; the interaction leads to CFTR ubiqtuitination and degradation. Interacts (via PDZ domain) with DLG1 (via PDZ domains); the interaction leads to DLG1 ubiqtuitination and degradation. Interacts with ERGIC3. Interacts with ADRB2. Interacts with IKBKG/NEMO; during the late stages of macrophage viral and bacterial infection; the interaction leads to ubiquitination and degradation of IKBKG/NEMO. Broadly expressed.

The protein resides in the endoplasmic reticulum membrane. It localises to the lysosome membrane. It is found in the endosome membrane. The protein localises to the golgi apparatus membrane. Its subcellular location is the cytoplasm. The protein resides in the cell membrane. It carries out the reaction S-ubiquitinyl-[E2 ubiquitin-conjugating enzyme]-L-cysteine + [acceptor protein]-L-lysine = [E2 ubiquitin-conjugating enzyme]-L-cysteine + N(6)-ubiquitinyl-[acceptor protein]-L-lysine.. It functions in the pathway protein modification; protein ubiquitination. Functionally, E3 ubiquitin-protein ligase that may mediate ubiquitination of TFRC and CD86, and promote their subsequent endocytosis and sorting to lysosomes via multivesicular bodies. E3 ubiquitin ligases accept ubiquitin from an E2 ubiquitin-conjugating enzyme in the form of a thioester and then directly transfer the ubiquitin to targeted substrates. Together with GOPC/CAL mediates the ubiquitination and lysosomal degradation of CFTR. Ubiquitinates and therefore mediates the degradation of DLG1. Regulates the intracellular trafficking and secretion of alpha1-antitrypsin/SERPINA1 and HP/haptoglobin via ubiquitination and degradation of the cargo receptor ERGIC3. Negatively regulates the antiviral and antibacterial immune response by repression of the NF-kB and type 1 IFN signaling pathways, via MARCHF2-mediated K48-linked polyubiquitination of IKBKG/NEMO, resulting in its proteasomal degradation. May be involved in endosomal trafficking through interaction with STX6. Its function is as follows. (Microbial infection) Positively regulates the degradation of Vesicular stomatitis virus (VSV) G protein via the lysosomal degradation pathway. Represses HIV-1 viral production and may inhibit the translocation of HIV-1 env to the cell surface, resulting in decreased viral cell-cell transmission. The polypeptide is E3 ubiquitin-protein ligase MARCHF2 (Homo sapiens (Human)).